A 953-amino-acid polypeptide reads, in one-letter code: Isoleucine--tRNA ligase (953 aa).

Residues Pro57 to His67 carry the 'HIGH' region motif. Glu582 is a binding site for L-isoleucyl-5'-AMP. The 'KMSKS' region motif lies at Lys623–Ser627. Lys626 provides a ligand contact to ATP. Zn(2+) contacts are provided by Cys916, Cys919, Cys936, and Cys939.

This sequence belongs to the class-I aminoacyl-tRNA synthetase family. IleS type 1 subfamily. As to quaternary structure, monomer. Requires Zn(2+) as cofactor.

The protein resides in the cytoplasm. It carries out the reaction tRNA(Ile) + L-isoleucine + ATP = L-isoleucyl-tRNA(Ile) + AMP + diphosphate. Functionally, catalyzes the attachment of isoleucine to tRNA(Ile). As IleRS can inadvertently accommodate and process structurally similar amino acids such as valine, to avoid such errors it has two additional distinct tRNA(Ile)-dependent editing activities. One activity is designated as 'pretransfer' editing and involves the hydrolysis of activated Val-AMP. The other activity is designated 'posttransfer' editing and involves deacylation of mischarged Val-tRNA(Ile). The sequence is that of Isoleucine--tRNA ligase from Bordetella bronchiseptica (strain ATCC BAA-588 / NCTC 13252 / RB50) (Alcaligenes bronchisepticus).